The sequence spans 35 residues: Photosystem II reaction center protein Psb30 (35 aa).

A helical membrane pass occupies residues 7–27; sequence VFVQLALLALIVLAGPAVILL.

The protein belongs to the Psb30/Ycf12 family. PSII is composed of 1 copy each of membrane proteins PsbA, PsbB, PsbC, PsbD, PsbE, PsbF, PsbH, PsbI, PsbJ, PsbK, PsbL, PsbM, PsbT, PsbX, PsbY, PsbZ, Psb30/Ycf12, peripheral proteins PsbO, CyanoQ (PsbQ), PsbU, PsbV and a large number of cofactors. It forms dimeric complexes.

The protein localises to the cellular thylakoid membrane. In terms of biological role, a core subunit of photosystem II (PSII), probably helps stabilize the reaction center. The sequence is that of Photosystem II reaction center protein Psb30 from Synechococcus sp. (strain JA-2-3B'a(2-13)) (Cyanobacteria bacterium Yellowstone B-Prime).